The following is a 208-amino-acid chain: Probable nicotinate-nucleotide adenylyltransferase (208 aa).

Belongs to the NadD family.

It catalyses the reaction nicotinate beta-D-ribonucleotide + ATP + H(+) = deamido-NAD(+) + diphosphate. It functions in the pathway cofactor biosynthesis; NAD(+) biosynthesis; deamido-NAD(+) from nicotinate D-ribonucleotide: step 1/1. Catalyzes the reversible adenylation of nicotinate mononucleotide (NaMN) to nicotinic acid adenine dinucleotide (NaAD). The chain is Probable nicotinate-nucleotide adenylyltransferase from Symbiobacterium thermophilum (strain DSM 24528 / JCM 14929 / IAM 14863 / T).